The sequence spans 222 residues: Uracil-DNA glycosylase (222 aa).

D66 acts as the Proton acceptor in catalysis.

It belongs to the uracil-DNA glycosylase (UDG) superfamily. UNG family.

Its subcellular location is the cytoplasm. The enzyme catalyses Hydrolyzes single-stranded DNA or mismatched double-stranded DNA and polynucleotides, releasing free uracil.. Its function is as follows. Excises uracil residues from the DNA which can arise as a result of misincorporation of dUMP residues by DNA polymerase or due to deamination of cytosine. The chain is Uracil-DNA glycosylase from Porphyromonas gingivalis (strain ATCC BAA-308 / W83).